Reading from the N-terminus, the 91-residue chain is Small ribosomal subunit protein uS19 (91 aa).

It belongs to the universal ribosomal protein uS19 family.

Its function is as follows. Protein S19 forms a complex with S13 that binds strongly to the 16S ribosomal RNA. The protein is Small ribosomal subunit protein uS19 of Verminephrobacter eiseniae (strain EF01-2).